Consider the following 331-residue polypeptide: Cytochrome bo(3) ubiquinol oxidase subunit 2 (331 aa).

An N-terminal signal peptide occupies residues 1-23 (MTKANPFAALKWLSLAPALLLGG). Cys24 carries the N-palmitoyl cysteine lipid modification. Cys24 is lipidated: S-diacylglycerol cysteine. Residues 24-41 (CDMTLFNPKGQVGMDERT) lie on the Periplasmic side of the membrane. A helical membrane pass occupies residues 42–62 (LIITATLLMLIVVIPVIVMTL). Over 63–86 (AFAWKYRASNTQAEYKPDWHHSNR) the chain is Cytoplasmic. Residues 87–107 (IEAVVWLVPCVIIAILGWITW) traverse the membrane as a helical segment. The Periplasmic portion of the chain corresponds to 108-331 (ESTHKLDPYR…DMHMQPSTQE (224 aa)).

This sequence belongs to the cytochrome c oxidase subunit 2 family. In terms of assembly, heterooctamer of two A chains, two B chains, two C chains and two D chains.

It is found in the cell inner membrane. Functionally, cytochrome bo(3) ubiquinol terminal oxidase is the component of the aerobic respiratory chain of E.coli that predominates when cells are grown at high aeration. Has proton pump activity across the membrane in addition to electron transfer, pumping 2 protons/electron. The chain is Cytochrome bo(3) ubiquinol oxidase subunit 2 (cyoA) from Pseudomonas aeruginosa (strain ATCC 15692 / DSM 22644 / CIP 104116 / JCM 14847 / LMG 12228 / 1C / PRS 101 / PAO1).